The following is a 221-amino-acid chain: Mitochondrial cardiolipin hydrolase (221 aa).

The Mitochondrial intermembrane portion of the chain corresponds to 1–4; it reads MGRS. Residues 1 to 38 form a required for mitochondrial localization region; it reads MGRSSWRLVFAAGAGLALALEALPWLMRWLLAGRRPRR. The helical transmembrane segment at 5-27 threads the bilayer; the sequence is SWRLVFAAGAGLALALEALPWLM. The Cytoplasmic segment spans residues 28 to 221; the sequence is RWLLAGRRPR…SFFPQKHRGH (194 aa). The C3H1-type; atypical zinc finger occupies 44 to 75; that stretch reads PSQVTCTEALLQAPGLPPGPSGCPCSLPHSES. In terms of domain architecture, PLD phosphodiesterase spans 148–175; that stretch reads DLGYMHHKFAIVDKKVLITGSLNWTTQA. Residues His-153, Lys-155, and Asp-160 contribute to the active site.

This sequence belongs to the phospholipase D family. MitoPLD/Zucchini subfamily. Homodimer. Interacts with MOV10L1. Interacts with MIGA1 and MIGA2; possibly facilitating homodimer formation. Interacts with GK2. Predominantly expressed in testis (at protein level) and in growing ovary. Also expressed in the brain, eye and urinary bladder (at protein level), but its levels were low or undetectable in other organs.

The protein localises to the mitochondrion outer membrane. It is found in the nucleus membrane. Its subcellular location is the cell membrane. The protein resides in the golgi apparatus. The enzyme catalyses a cardiolipin + H2O = a 1,2-diacyl-sn-glycero-3-phospho-(1'-sn-glycerol) + a 1,2-diacyl-sn-glycero-3-phosphate + H(+). With respect to regulation, single stranded DNA (ssDNA) hydrolase activity does not depend upon, but is stimulated by the presence of Ca(2+) and Mn(2+). MIGA1 and MIGA2 increase PLD6 self-association affinity and affects the homodimer conformation facilitating its phospholipase activity over the nuclease activity. MYC induces its expression and stimulates its phospholipase activity. In terms of biological role, presents phospholipase and nuclease activities, depending on the different physiological conditions. Interaction with Mitoguardin (MIGA1 or MIGA2) affects the dimer conformation, facilitating the lipase activity over the nuclease activity. Plays a key role in mitochondrial fusion and fission via its phospholipase activity. In its phospholipase role, it uses the mitochondrial lipid cardiolipin as substrate to generate phosphatidate (PA or 1,2-diacyl-sn-glycero-3-phosphate), a second messenger signaling lipid. Production of PA facilitates Mitofusin-mediated fusion, whereas the cleavage of PA by the Lipin family of phosphatases produces diacylgycerol (DAG) which promotes mitochondrial fission. Both Lipin and DAG regulate mitochondrial dynamics and membrane fusion/fission, important processes for adapting mitochondrial metabolism to changes in cell physiology. Mitochondrial fusion enables cells to cope with the increased nucleotide demand during DNA synthesis. Mitochondrial function and dynamics are closely associated with biological processes such as cell growth, proliferation, and differentiation. Mediator of MYC activity, promotes mitochondrial fusion and activates AMPK which in turn inhibits YAP/TAZ, thereby inducing cell growth and proliferation. The endonuclease activity plays a critical role in PIWI-interacting RNA (piRNA) biogenesis during spermatogenesis. Implicated in spermatogenesis and sperm fertility in testicular germ cells, its single strand-specific nuclease activity is critical for the biogenesis/maturation of PIWI-interacting RNA (piRNA). MOV10L1 selectively binds to piRNA precursors and funnels them to the endonuclease that catalyzes the first cleavage step of piRNA processing to generate piRNA intermediate fragments that are subsequently loaded to Piwi proteins. Cleaves either DNA or RNA substrates with similar affinity, producing a 5' phosphate end, in this way it participates in the processing of primary piRNA transcripts. piRNAs provide essential protection against the activity of mobile genetic elements. piRNA-mediated transposon silencing is thus critical for maintaining genome stability, in particular in germline cells when transposons are mobilized as a consequence of wide-spread genomic demethylation. PA may act as signaling molecule in the recognition/transport of the precursor RNAs of primary piRNAs. Interacts with tesmin in testes, suggesting a role in spermatogenesis via association with its interacting partner. This is Mitochondrial cardiolipin hydrolase (Pld6) from Mus musculus (Mouse).